The following is a 127-amino-acid chain: Fluoride-specific ion channel FluC (127 aa).

4 helical membrane passes run 4-24, 35-55, 71-91, and 103-123; these read LLLAVFIGGGTGSVARWLLSM, LGTLTANLIGAFIIGMGFAWF, TGFCGGLTTFSTFSAEVVFLL, and VFVNLLGSFAMTALAFWLFSA. Residues Gly75 and Thr78 each contribute to the Na(+) site.

Belongs to the fluoride channel Fluc/FEX (TC 1.A.43) family.

The protein localises to the cell inner membrane. The enzyme catalyses fluoride(in) = fluoride(out). Its activity is regulated as follows. Na(+) is not transported, but it plays an essential structural role and its presence is essential for fluoride channel function. In terms of biological role, fluoride-specific ion channel. Important for reducing fluoride concentration in the cell, thus reducing its toxicity. The sequence is that of Fluoride-specific ion channel FluC from Escherichia coli O7:K1 (strain IAI39 / ExPEC).